We begin with the raw amino-acid sequence, 375 residues long: Killer cell immunoglobulin-like receptor 2DL5A (375 aa).

A signal peptide spans 1 to 21; that stretch reads MSLMVISMACVGFFLLQGAWT. Topologically, residues 22–238 are extracellular; sequence HEGGQDKPLL…PSSKTGIRRH (217 aa). 2 Ig-like C2-type domains span residues 42–102 and 137–200; these read GGHV…HPRS and GENV…LHDS. Cysteine 49 and cysteine 95 are oxidised to a cystine. Residues asparagine 139, asparagine 173, and asparagine 218 are each glycosylated (N-linked (GlcNAc...) asparagine). A disulfide bridge links cysteine 144 with cysteine 193. A disordered region spans residues 213–233; that stretch reads VSVTGNSSSSSSSPTEPSSKT. The span at 219–231 shows a compositional bias: low complexity; sequence SSSSSSSPTEPSS. Residues 239–259 form a helical membrane-spanning segment; sequence LHILIGTSVAIILFIILFFFL. The Cytoplasmic segment spans residues 260-375; that stretch reads LHCCCSNKKN…ASSHVPAAGI (116 aa). A disordered region spans residues 334 to 375; sequence AKPRSLSPAHKHHSQALRGSSRETTALSQNRVASSHVPAAGI. The segment covering 355 to 366 has biased composition (polar residues); the sequence is RETTALSQNRVA.

It belongs to the immunoglobulin superfamily.

Its subcellular location is the cell membrane. Its function is as follows. Receptor on natural killer (NK) cells for HLA-C alleles. Inhibits the activity of NK cells thus preventing cell lysis. The sequence is that of Killer cell immunoglobulin-like receptor 2DL5A (KIR2DL5A) from Homo sapiens (Human).